A 119-amino-acid chain; its full sequence is NADH dehydrogenase [ubiquinone] 1 subunit C2 (119 aa).

A helical membrane pass occupies residues 56–75; it reads GLHRQLLYITAFFFAGYYLV.

This sequence belongs to the complex I NDUFC2 subunit family. As to quaternary structure, complex I is composed of 45 different subunits. Interacts with TMEM242.

It is found in the mitochondrion inner membrane. Accessory subunit of the mitochondrial membrane respiratory chain NADH dehydrogenase (Complex I), that is believed not to be involved in catalysis but required for the complex assembly. Complex I functions in the transfer of electrons from NADH to the respiratory chain. The immediate electron acceptor for the enzyme is believed to be ubiquinone. This chain is NADH dehydrogenase [ubiquinone] 1 subunit C2, found in Pan troglodytes (Chimpanzee).